The chain runs to 1228 residues: DNA-directed RNA polymerase subunit beta (1228 aa).

The protein belongs to the RNA polymerase beta chain family. In terms of assembly, the RNAP catalytic core consists of 2 alpha, 1 beta, 1 beta' and 1 omega subunit. When a sigma factor is associated with the core the holoenzyme is formed, which can initiate transcription.

It carries out the reaction RNA(n) + a ribonucleoside 5'-triphosphate = RNA(n+1) + diphosphate. In terms of biological role, DNA-dependent RNA polymerase catalyzes the transcription of DNA into RNA using the four ribonucleoside triphosphates as substrates. The chain is DNA-directed RNA polymerase subunit beta from Leptospira biflexa serovar Patoc (strain Patoc 1 / Ames).